Consider the following 451-residue polypeptide: MSEQEIWKKVLEVAESEISKSTFNTFLKDTELKEIRDNVAIIFVIHEFYAEWLNSNYKEVIQTIMKDVIGYEVEPKFFTAEQLAELDETSRKSNTPSEPQRQIIEYGHEGTDQFNTHNTFDTFVIGPGNRFPHAASLAVAEAPAQAYNPLFIYGGVGLGKTHLMHAIGHHVLSNQPNAKVLYTSSEKFTNDFIKSIRNNEPEAFREKYRNIDVLLIDDIQFIQNKEQTQEEFFHTFNELHQNKKQIVISSDRPPKEIAKLEDRLRSRFEWGLIVDITPPDYETRMAILQKKIEEENLEIPAEALNYIANQIQSNIRELEGALTRLLAYSKLQGRPITTELAAEALKDIIQVPKSKKITIQDIQKVVGHYYNVRIEDFSAKKRTKSIAYPRQIAMYLSRELTDFSLPKIGEEFGGRDHTTVIHAHEKIAKDIKADTIFKQEVEDLEKEIRNQ.

The domain I, interacts with DnaA modulators stretch occupies residues 1 to 71 (MSEQEIWKKV…QTIMKDVIGY (71 aa)). The interval 71 to 112 (YEVEPKFFTAEQLAELDETSRKSNTPSEPQRQIIEYGHEGTD) is domain II. Positions 113–329 (QFNTHNTFDT…GALTRLLAYS (217 aa)) are domain III, AAA+ region. ATP is bound by residues Gly157, Gly159, Lys160, and Thr161. Positions 330 to 451 (KLQGRPITTE…EDLEKEIRNQ (122 aa)) are domain IV, binds dsDNA.

The protein belongs to the DnaA family. In terms of assembly, oligomerizes as a right-handed, spiral filament on DNA at oriC.

The protein localises to the cytoplasm. In terms of biological role, plays an essential role in the initiation and regulation of chromosomal replication. ATP-DnaA binds to the origin of replication (oriC) to initiate formation of the DNA replication initiation complex once per cell cycle. Binds the DnaA box (a 9 base pair repeat at the origin) and separates the double-stranded (ds)DNA. Forms a right-handed helical filament on oriC DNA; dsDNA binds to the exterior of the filament while single-stranded (ss)DNA is stabiized in the filament's interior. The ATP-DnaA-oriC complex binds and stabilizes one strand of the AT-rich DNA unwinding element (DUE), permitting loading of DNA polymerase. After initiation quickly degrades to an ADP-DnaA complex that is not apt for DNA replication. Binds acidic phospholipids. In Staphylococcus haemolyticus (strain JCSC1435), this protein is Chromosomal replication initiator protein DnaA.